A 2799-amino-acid chain; its full sequence is E3 ubiquitin-protein ligase UBR5 (2799 aa).

Thr-2 carries the post-translational modification N-acetylthreonine. Over residues 77-88 (DRLELGKPDNND) the composition is skewed to basic and acidic residues. Positions 77-175 (DRLELGKPDN…DRGSGLLGSQ (99 aa)) are disordered. Polar residues predominate over residues 89–110 (GSKLNSNSGAGRTSRPGRTSDS). The residue at position 110 (Ser-110) is a Phosphoserine. The segment covering 135 to 144 (GVGGSGGGSS) has biased composition (gly residues). The UBA domain occupies 184–226 (VIPEELISQAQVVLQGKSRSVIIRELQRTNLDVNLAVNNLLSR). At Ser-327 the chain carries Phosphoserine. Over residues 328–347 (FDNERGSTSKEGEPNLDKKN) the composition is skewed to basic and acidic residues. The segment at 328–352 (FDNERGSTSKEGEPNLDKKNTPVQS) is disordered. Residues Ser-352 and Ser-578 each carry the phosphoserine modification. Residues 579–648 (PESLKNMEKA…APKEEEKVNE (70 aa)) form a disordered region. Positions 583-604 (KNMEKASKTTEAKPESKQEPVK) are enriched in basic and acidic residues. The residue at position 612 (Ser-612) is a Phosphoserine. Residues 614–628 (ASTCSDASSIASSAS) are compositionally biased toward low complexity. At Thr-637 the chain carries Phosphothreonine. A phosphoserine mark is found at Ser-808, Ser-928, and Ser-1018. Disordered regions lie at residues 999–1031 (AGLGRHEAGASSSDHQDPVSPPIAPPSWVPDPP) and 1052–1075 (TAATGTGQGPSTSTIPGPSTEPSV). Residues 1017–1031 (VSPPIAPPSWVPDPP) show a composition bias toward pro residues. A compositionally biased stretch (polar residues) spans 1052–1073 (TAATGTGQGPSTSTIPGPSTEP). Residues Thr-1115 and Thr-1135 each carry the phosphothreonine modification. The UBR-type zinc-finger motif lies at 1177 to 1245 (DTCSFTWTGA…EKCKCKTLIA (69 aa)). Zn(2+) contacts are provided by Cys-1179, Cys-1196, Cys-1199, Cys-1208, Cys-1211, Cys-1215, His-1216, and His-1219. Phosphoserine is present on Ser-1227. Zn(2+) contacts are provided by Cys-1232, Cys-1234, and Cys-1240. Residues 1299–1318 (REDRNRKTASPEDSDMPDHD) are disordered. Phosphoserine occurs at positions 1308, 1355, 1375, and 1481. The interval 1515–1740 (SVEPLPPRPS…PSSTSTPAAS (226 aa)) is disordered. The span at 1524–1537 (SSDQSSSSSQSQSS) shows a compositional bias: low complexity. Residues 1538 to 1553 (YIIRNPQQRRISQSQP) show a composition bias toward polar residues. Ser-1549 is subject to Phosphoserine. Acidic residues-rich tracts occupy residues 1559 to 1574 (EEQDDIVSADVEEVEV) and 1605 to 1614 (HDEDGSDMEL). Positions 1629-1638 (NHSNQDNASG) are enriched in polar residues. 3 stretches are compositionally biased toward low complexity: residues 1641-1657 (SVVTAATAGSEAGASSV), 1668-1681 (SNDSSDSDSSSSQS), and 1726-1740 (AASTAPSSTSTPAAS). Position 1736 is a phosphothreonine (Thr-1736). Residue Ser-1741 is modified to Phosphoserine. Tyr-1746 is modified (phosphotyrosine). Ser-1780 is modified (phosphoserine). Residues 1859 to 1890 (LASAGDPGHPNHPLHASQNSARRERMTAREEA) are disordered. Residues 1879–1890 (ARRERMTAREEA) are compositionally biased toward basic and acidic residues. Residue Thr-1969 is modified to Phosphothreonine. The segment at 1984-2021 (GIDNEDSEHENDDDTNQSATLNDKDDDSLPAETGQNHP) is disordered. Positions 1985–1998 (IDNEDSEHENDDDT) are enriched in acidic residues. Phosphoserine is present on residues Ser-1990, Ser-2026, and Ser-2028. At Thr-2030 the chain carries Phosphothreonine. Phosphoserine is present on Ser-2076. A disordered region spans residues 2117 to 2142 (RQKKEGEEQPVLPEETESSKPGPSAH). Residue Thr-2213 is modified to Phosphothreonine. A phosphoserine mark is found at Ser-2241 and Ser-2289. The tract at residues 2323-2392 (HTSLMQRLRN…PSDDPEPLPA (70 aa)) is disordered. Basic and acidic residues-rich tracts occupy residues 2332 to 2348 (NRGERDREREREREMRR) and 2356 to 2368 (SRRDRDRDFRRQL). The region spanning 2377–2454 (PASEGNPSDD…AMELIIAHGR (78 aa)) is the PABC domain. The HECT domain maps to 2462–2799 (LDLGLVDSSE…AIKTKNFGFV (338 aa)). Residues Ser-2469, Ser-2484, and Ser-2486 each carry the phosphoserine modification. A disordered region spans residues 2473 to 2493 (VQQENRKRHGSSRSVVDMDLD). Cys-2768 (glycyl thioester intermediate) is an active-site residue.

It belongs to the UBR5 family. In terms of assembly, homotetramer; composed of a dimer of dimers. Associates with CDK9 and TFIIS/TCEA1 and forms a transcription regulatory complex made of CDK9, RNAP II, UBR5 and TFIIS/TCEA1 that can stimulate target gene transcription (e.g. gamma fibrinogen/FGG) by recruiting their promoters. Associates with the E3 ligase complex containing DYRK2, EDD/UBR5, DDB1 and DCAF1 proteins (EDVP complex). Binds TOPBP1. Interacts with PIH1D1. Interacts with CIB1. (Microbial infection) Interacts with human T-cell leukemia virus 1/HTLV-1 protein HBZ; this interaction modulates HBZ stability. Widely expressed. Most abundant in testis and expressed at high levels in brain, pituitary and kidney.

The protein resides in the nucleus. Its subcellular location is the cytoplasm. It catalyses the reaction S-ubiquitinyl-[E2 ubiquitin-conjugating enzyme]-L-cysteine + [acceptor protein]-L-lysine = [E2 ubiquitin-conjugating enzyme]-L-cysteine + N(6)-ubiquitinyl-[acceptor protein]-L-lysine.. Its pathway is protein modification; protein ubiquitination. Functionally, E3 ubiquitin-protein ligase involved in different protein quality control pathways in the cytoplasm and nucleus. Mainly acts as a ubiquitin chain elongator that extends pre-ubiquitinated substrates. Component of the N-end rule pathway: ubiquitinates proteins bearing specific N-terminal residues that are destabilizing according to the N-end rule, leading to their degradation. Recognizes type-1 N-degrons, containing positively charged amino acids (Arg, Lys and His). Together with UBR4, part of a cytoplasm protein quality control pathway that prevents protein aggregation by catalyzing assembly of heterotypic 'Lys-11'-/'Lys-48'-linked branched ubiquitin chains on aggregated proteins, leading to substrate recognition by the segregase p97/VCP and degradation by the proteasome: UBR5 is probably branching multiple 'Lys-48'-linked chains of substrates initially modified with mixed conjugates by UBR4. Together with ITCH, catalyzes 'Lys-48'-/'Lys-63'-branched ubiquitination of TXNIP, leading to its degradation: UBR5 mediates branching of 'Lys-48'-linked chains of substrates initially modified with 'Lys-63'-linked conjugates by ITCH. Catalytic component of a nuclear protein quality control pathway that mediates ubiquitination and degradation of unpaired transcription factors (i.e. transcription factors that are not assembled into functional multiprotein complexes): specifically recognizes and binds degrons that are not accessible when transcription regulators are associated with their coactivators. Ubiquitinates various unpaired transcription regulator (MYC, SUPT4H1, SUPT5H, CDC20 and MCRS1), as well as ligand-bound nuclear receptors (ESR1, NR1H3, NR3C1, PGR, RARA, RXRA AND VDR) that are not associated with their nuclear receptor coactivators (NCOAs). Involved in maturation and/or transcriptional regulation of mRNA by mediating polyubiquitination and activation of CDK9. Also acts as a regulator of DNA damage response by acting as a suppressor of RNF168, an E3 ubiquitin-protein ligase that promotes accumulation of 'Lys-63'-linked histone H2A and H2AX at DNA damage sites, thereby acting as a guard against excessive spreading of ubiquitinated chromatin at damaged chromosomes. Regulates DNA topoisomerase II binding protein (TopBP1) in the DNA damage response. Ubiquitinates acetylated PCK1. Acts as a positive regulator of the canonical Wnt signaling pathway by mediating (1) ubiquitination and stabilization of CTNNB1, and (2) 'Lys-48'-linked ubiquitination and degradation of TLE3. Promotes disassembly of the mitotic checkpoint complex (MCC) from the APC/C complex by catalyzing ubiquitination of BUB1B, BUB3 and CDC20. Plays an essential role in extraembryonic development. Required for the maintenance of skeletal tissue homeostasis by acting as an inhibitor of hedgehog (HH) signaling. The protein is E3 ubiquitin-protein ligase UBR5 (UBR5) of Homo sapiens (Human).